The chain runs to 465 residues: UDP-N-acetylmuramate--L-alanine ligase (465 aa).

An ATP-binding site is contributed by 112-118; it reads GTHGKTT.

Belongs to the MurCDEF family.

The protein localises to the cytoplasm. The catalysed reaction is UDP-N-acetyl-alpha-D-muramate + L-alanine + ATP = UDP-N-acetyl-alpha-D-muramoyl-L-alanine + ADP + phosphate + H(+). It functions in the pathway cell wall biogenesis; peptidoglycan biosynthesis. Its function is as follows. Cell wall formation. The sequence is that of UDP-N-acetylmuramate--L-alanine ligase from Burkholderia pseudomallei (strain 1106a).